Reading from the N-terminus, the 251-residue chain is Gamma-glutamyl peptidase 5 (251 aa).

The 198-residue stretch at 17-214 folds into the Glutamine amidotransferase type-1 domain; sequence STFVKKAYGG…IDRVVNLKLM (198 aa). Residue Cys-101 is the Nucleophile of the active site. Residues His-193 and Glu-195 contribute to the active site.

This sequence belongs to the peptidase C26 family.

The protein resides in the cytoplasm. It is found in the cytosol. It participates in secondary metabolite biosynthesis. Involved in glucosinolate biosynthesis. Hydrolyzes the gamma-glutamyl peptide bond of several glutathione (GSH) conjugates to produce Cys-Gly conjugates related to glucosinolates. The gamma-Glu-Cys-Gly-GSH conjugates are the sulfur-donating molecule in glucosinolate biosynthesis. This Arabidopsis thaliana (Mouse-ear cress) protein is Gamma-glutamyl peptidase 5.